We begin with the raw amino-acid sequence, 588 residues long: MMEPPAAAARASCRRRPLLCLLLAALCMPPALGLYTVNAVYGDTITMPCRLEVPDGLMFGKWKYEMPNGSPVFIAFRSSTKKNVQYDDVPDYKDRLSLSENYTLSIKNARISDEKRFVCMLVTEDDVSEEPTVVKVFKQPSQPEILHQADFLETEKLKMLGECVVRDSYPEGNVTWYKNGRVLQPVEEVVVINLRKVENRSTGLFTMTSSLQYMPTKEDANAKFTCIVTYHGPSGQKTIQSEPVVFDVHYPTEKVTIRVLSQSSTIKEGDNVTLKCSGNGNPPPQEFLFYIPGETEGIRSSDTYVMTDVRRNATGEYKCSLIDKSMMDATTITVHYLDLQLTPSGEVTKQIGEALPVSCTISSSRNATVFWIKDNTRMKTSPSFSSLQYQDAGNYICETTLQEVEGLKKRKTLKLIVEGKPQIKMTKKTNTNKMSKTIVCHVEGFPKPAVQWTVTGSGSLINKTEETKYVNGKFSSKIIIAPEENVTLTCIAENELERTVTSLNVSAISIPEYDEPEDRNDDNSEKVNDQAKLIVGIVVGLLLVALVAGVVYWLYVKKSKTASKHVDKDLGNIEENKKLEENNHKSET.

The first 33 residues, 1–33, serve as a signal peptide directing secretion; it reads MMEPPAAAARASCRRRPLLCLLLAALCMPPALG. Ig-like V-type domains are found at residues 34 to 126 and 131 to 240; these read LYTV…TEDD and PTVV…KTIQ. Residues 34 to 532 lie on the Extracellular side of the membrane; sequence LYTVNAVYGD…NSEKVNDQAK (499 aa). Intrachain disulfides connect cysteine 49-cysteine 119 and cysteine 163-cysteine 226. N-linked (GlcNAc...) asparagine glycosylation is found at asparagine 101, asparagine 173, asparagine 199, asparagine 271, asparagine 312, asparagine 366, asparagine 462, asparagine 485, and asparagine 504. Ig-like C2-type domains lie at 251–333, 338–414, and 421–501; these read PTEK…TTIT, DLQL…KTLK, and PQIK…RTVT. 3 disulfides stabilise this stretch: cysteine 276/cysteine 319, cysteine 359/cysteine 397, and cysteine 440/cysteine 490. Residues 533-553 form a helical membrane-spanning segment; sequence LIVGIVVGLLLVALVAGVVYW. The Cytoplasmic segment spans residues 554 to 588; it reads LYVKKSKTASKHVDKDLGNIEENKKLEENNHKSET.

As to quaternary structure, homodimer. Interacts (via extracellular domain) with CD6 (via extracellular domain). Homodimerization and interaction with CD6 involve the same region and cannot occur simultaneously. The affinity for CD6 is much higher than the affinity for self-association. In terms of processing, glycosylated. In terms of tissue distribution, detected in embryo. Detected in embryonic spinal cord and embryonic brain. Within the spinal cord it is localized to axons in the dorsal funiculus, midline floor plate cells, and motoneurons. Detected in embryonic epithelia and brain. After hatching, detected in bursa of Fabricius and thymus. Detected on embryonic retinal ganglion cell axon growth cones (at protein level). Detected in embryonic retina and in the optic fiber layer, which is composed of retinal ganglion cell axons and their growth cones.

Its subcellular location is the cell membrane. It localises to the cell projection. The protein localises to the axon. It is found in the dendrite. In terms of biological role, cell adhesion molecule that mediates both heterotypic cell-cell contacts via its interaction with CD6, as well as homotypic cell-cell contacts. Promotes T-cell activation and proliferation via its interactions with CD6. Contributes to the formation and maturation of the immunological synapse via its interactions with CD6. Mediates homotypic interactions with cells that express ALCAM. Mediates attachment of dendritic cells onto endothelial cells via homotypic interaction. Inhibits endothelial cell migration and promotes endothelial tube formation via homotypic interactions. Required for normal organization of the lymph vessel network. Required for normal hematopoietic stem cell engraftment in the bone marrow. Plays a role in hematopoiesis; required for normal numbers of hematopoietic stem cells in bone marrow. Promotes in vitro osteoblast proliferation and differentiation. Promotes neurite extension, axon growth and axon guidance; axons grow preferentially on surfaces that contain ALCAM. Mediates outgrowth and pathfinding for retinal ganglion cell axons. The polypeptide is CD166 antigen (ALCAM) (Gallus gallus (Chicken)).